Consider the following 429-residue polypeptide: D-inositol 3-phosphate glycosyltransferase (429 aa).

His20 lines the 1D-myo-inositol 3-phosphate pocket. Residues Gln26 to Pro27 and Gly34 each bind UDP-N-acetyl-alpha-D-glucosamine. Residues Asp31–Asn36, Lys89, Tyr122, Thr146, and Arg166 contribute to the 1D-myo-inositol 3-phosphate site. UDP-N-acetyl-alpha-D-glucosamine is bound by residues Arg240, Lys245, and Gln306. Mg(2+)-binding residues include Tyr315, Arg316, and Ala318. 2 residues coordinate UDP-N-acetyl-alpha-D-glucosamine: Glu328 and Glu336. A Mg(2+)-binding site is contributed by Thr342.

The protein belongs to the glycosyltransferase group 1 family. MshA subfamily. As to quaternary structure, homodimer.

It carries out the reaction 1D-myo-inositol 3-phosphate + UDP-N-acetyl-alpha-D-glucosamine = 1D-myo-inositol 2-acetamido-2-deoxy-alpha-D-glucopyranoside 3-phosphate + UDP + H(+). In terms of biological role, catalyzes the transfer of a N-acetyl-glucosamine moiety to 1D-myo-inositol 3-phosphate to produce 1D-myo-inositol 2-acetamido-2-deoxy-glucopyranoside 3-phosphate in the mycothiol biosynthesis pathway. This chain is D-inositol 3-phosphate glycosyltransferase, found in Nocardiopsis dassonvillei (strain ATCC 23218 / DSM 43111 / CIP 107115 / JCM 7437 / KCTC 9190 / NBRC 14626 / NCTC 10488 / NRRL B-5397 / IMRU 509) (Actinomadura dassonvillei).